The sequence spans 100 residues: Aspartyl/glutamyl-tRNA(Asn/Gln) amidotransferase subunit C (100 aa).

The protein belongs to the GatC family. As to quaternary structure, heterotrimer of A, B and C subunits.

It carries out the reaction L-glutamyl-tRNA(Gln) + L-glutamine + ATP + H2O = L-glutaminyl-tRNA(Gln) + L-glutamate + ADP + phosphate + H(+). The catalysed reaction is L-aspartyl-tRNA(Asn) + L-glutamine + ATP + H2O = L-asparaginyl-tRNA(Asn) + L-glutamate + ADP + phosphate + 2 H(+). In terms of biological role, allows the formation of correctly charged Asn-tRNA(Asn) or Gln-tRNA(Gln) through the transamidation of misacylated Asp-tRNA(Asn) or Glu-tRNA(Gln) in organisms which lack either or both of asparaginyl-tRNA or glutaminyl-tRNA synthetases. The reaction takes place in the presence of glutamine and ATP through an activated phospho-Asp-tRNA(Asn) or phospho-Glu-tRNA(Gln). The chain is Aspartyl/glutamyl-tRNA(Asn/Gln) amidotransferase subunit C from Rickettsia canadensis (strain McKiel).